The chain runs to 90 residues: DNA-binding protein HU-alpha (90 aa).

Belongs to the bacterial histone-like protein family. In terms of assembly, heterodimer of an alpha and a beta chain.

Functionally, histone-like DNA-binding protein which is capable of wrapping DNA to stabilize it, and thus to prevent its denaturation under extreme environmental conditions. The sequence is that of DNA-binding protein HU-alpha (hupA) from Serratia marcescens.